Consider the following 1255-residue polypeptide: DNA-directed RNA polymerase subunit beta' (1255 aa).

Zn(2+) is bound by residues Cys-60, Cys-62, Cys-77, and Cys-80. Asp-503, Asp-505, and Asp-507 together coordinate Mg(2+). Cys-875, Cys-950, Cys-957, and Cys-960 together coordinate Zn(2+).

Belongs to the RNA polymerase beta' chain family. The RNAP catalytic core consists of 2 alpha, 1 beta, 1 beta' and 1 omega subunit. When a sigma factor is associated with the core the holoenzyme is formed, which can initiate transcription. Requires Mg(2+) as cofactor. The cofactor is Zn(2+).

It carries out the reaction RNA(n) + a ribonucleoside 5'-triphosphate = RNA(n+1) + diphosphate. In terms of biological role, DNA-dependent RNA polymerase catalyzes the transcription of DNA into RNA using the four ribonucleoside triphosphates as substrates. The sequence is that of DNA-directed RNA polymerase subunit beta' from Mycoplasma capricolum subsp. capricolum (strain California kid / ATCC 27343 / NCTC 10154).